A 462-amino-acid chain; its full sequence is uncharacterized protein (462 aa).

The 59-residue stretch at Met-12–Ala-70 folds into the TRAM domain. S-adenosyl-L-methionine-binding residues include Gln-294, Tyr-323, Glu-344, and Asp-392. The Nucleophile role is filled by Cys-419.

It belongs to the class I-like SAM-binding methyltransferase superfamily. RNA M5U methyltransferase family.

This is an uncharacterized protein from Streptococcus pyogenes serotype M18 (strain MGAS8232).